The sequence spans 1196 residues: Nucleolar protein 6 (1196 aa).

Disordered regions lie at residues 1–74 (MPGK…NVKP) and 1140–1196 (KREQ…KALK). 2 stretches are compositionally biased toward basic and acidic residues: residues 22 to 31 (HAEDHSDLEH) and 65 to 74 (HRGDTKNVKP). The span at 1165–1187 (KPKKHGKRKGTGKAAPPKKKRLI) shows a compositional bias: basic residues.

This sequence belongs to the NRAP family. As to quaternary structure, part of the small subunit (SSU) processome, composed of more than 70 proteins and the RNA chaperone small nucleolar RNA (snoRNA) U3.

The protein localises to the nucleus. It is found in the nucleolus. Its subcellular location is the chromosome. Part of the small subunit (SSU) processome, first precursor of the small eukaryotic ribosomal subunit. During the assembly of the SSU processome in the nucleolus, many ribosome biogenesis factors, an RNA chaperone and ribosomal proteins associate with the nascent pre-rRNA and work in concert to generate RNA folding, modifications, rearrangements and cleavage as well as targeted degradation of pre-ribosomal RNA by the RNA exosome. This is Nucleolar protein 6 from Drosophila simulans (Fruit fly).